The chain runs to 185 residues: MTNQIYKQVFSFFLSVLLLQSSTVSYVPKSFDLKKPCKHFVLYLHNIAYDGDNAANATAATIVKPLGLGDHSFGELIIINNPVTLDQNYLSKPVARAQGFYFYNMKTNYNAWVAWTLVFNSTKHKGTFTIMDANPFGLQPARDLSIVGGTGDFLMTRGIATFKTKLTQGSKYFCVEMNIKLYECY.

Positions 1–25 (MTNQIYKQVFSFFLSVLLLQSSTVS) are cleaved as a signal peptide. The cysteines at positions 37 and 184 are disulfide-linked. N-linked (GlcNAc...) asparagine glycans are attached at residues asparagine 56 and asparagine 120.

Belongs to the plant dirigent protein family. As to quaternary structure, homodimer. Seed coat specific expression.

The protein localises to the secreted. The protein resides in the extracellular space. It localises to the apoplast. Functionally, dirigent proteins impart stereoselectivity on the phenoxy radical-coupling reaction, yielding optically active lignans from two molecules of coniferyl alcohol in the biosynthesis of lignans, flavonolignans, and alkaloids and thus plays a central role in plant secondary metabolism. Required for seed accumulation of neolignans. The sequence is that of Dirigent protein 12 (DIR12) from Arabidopsis thaliana (Mouse-ear cress).